Consider the following 546-residue polypeptide: Peroxisomal OPC-8:0-CoA ligase 1 (546 aa).

The ATP site is built by serine 197, serine 198, glycine 199, threonine 200, threonine 201, and lysine 205. Lysine 265 contacts CoA. The interval 267–338 (EMHEMMSAIG…EKYPTVKILQ (72 aa)) is SBD1. Residues glutamine 338, glycine 339, threonine 343, aspartate 424, and arginine 439 each coordinate ATP. Residues 339–403 (GYGLTESTGI…LKGPSIMKGY (65 aa)) form an SBD2 region. CoA contacts are provided by lysine 447 and glycine 448. Lysine 530 lines the ATP pocket. Residues 544–546 (SKL) carry the Microbody targeting signal motif.

It belongs to the ATP-dependent AMP-binding enzyme family. Mg(2+) serves as cofactor. As to expression, expressed at low levels in seedlings, cotyledons, leaves, hypocotyls and roots.

It localises to the peroxisome. It catalyses the reaction (9S,13S,15Z)-12-oxophyto-10,15-dienoate + ATP + CoA = (10Z,15Z)-12-oxophytodienoyl-CoA + AMP + diphosphate. The catalysed reaction is (1S,2S)-OPC-8 + ATP + CoA = OPC8-CoA + AMP + diphosphate. It carries out the reaction hexadecanoate + ATP + CoA = hexadecanoyl-CoA + AMP + diphosphate. The enzyme catalyses (9Z)-octadecenoate + ATP + CoA = (9Z)-octadecenoyl-CoA + AMP + diphosphate. It catalyses the reaction tetradecanoate + ATP + CoA = tetradecanoyl-CoA + AMP + diphosphate. The catalysed reaction is decanoate + ATP + CoA = decanoyl-CoA + AMP + diphosphate. It carries out the reaction dodecanoate + ATP + CoA = dodecanoyl-CoA + AMP + diphosphate. The enzyme catalyses octadecanoate + ATP + CoA = octadecanoyl-CoA + AMP + diphosphate. It catalyses the reaction OPC-6 + ATP + CoA = OPC-6-CoA + AMP + diphosphate. The catalysed reaction is dinor-OPDA + ATP + CoA = dinor-OPDA-CoA + AMP + diphosphate. In terms of biological role, contributes to jasmonic acid biosynthesis by initiating the beta-oxidative chain shortening of its precursors. Converts 12-oxo-phytodienoic acid (OPDA) and 3-oxo-2-(2'-pentenyl)-cyclopentane-1-octanoic acid (OPC-8:0) into OPDA-CoA and OPC-8:0-CoA, respectively. Follows a two-step reaction mechanism, wherein the carboxylate substrate first undergoes adenylation by ATP, followed by a thioesterification in the presence of CoA to yield the final CoA thioester. The protein is Peroxisomal OPC-8:0-CoA ligase 1 of Arabidopsis thaliana (Mouse-ear cress).